Reading from the N-terminus, the 154-residue chain is Probable prefoldin subunit 5 (154 aa).

Belongs to the prefoldin subunit alpha family. As to quaternary structure, heterohexamer of two PFD-alpha type and four PFD-beta type subunits. Interacts with byr1.

It is found in the cytoplasm. In terms of biological role, binds specifically to cytosolic chaperonin (c-CPN) and transfers target proteins to it. Binds to nascent polypeptide chain and promotes folding in an environment in which there are many competing pathways for nonnative proteins. Required for normal cytoskeletal function and when bound to byr1, is involved in the regulation of sexual differentiation. In Schizosaccharomyces pombe (strain 972 / ATCC 24843) (Fission yeast), this protein is Probable prefoldin subunit 5 (bob1).